Consider the following 238-residue polypeptide: Pyridoxine 5'-phosphate synthase (238 aa).

3-amino-2-oxopropyl phosphate contacts are provided by Asn-7 and Arg-18. The active-site Proton acceptor is the His-43. Positions 45 and 50 each coordinate 1-deoxy-D-xylulose 5-phosphate. Glu-70 (proton acceptor) is an active-site residue. Thr-100 contacts 1-deoxy-D-xylulose 5-phosphate. Residue His-190 is the Proton donor of the active site. Residues Asp-191 and 213 to 214 (GH) each bind 3-amino-2-oxopropyl phosphate.

This sequence belongs to the PNP synthase family. In terms of assembly, homooctamer; tetramer of dimers.

It is found in the cytoplasm. It carries out the reaction 3-amino-2-oxopropyl phosphate + 1-deoxy-D-xylulose 5-phosphate = pyridoxine 5'-phosphate + phosphate + 2 H2O + H(+). The protein operates within cofactor biosynthesis; pyridoxine 5'-phosphate biosynthesis; pyridoxine 5'-phosphate from D-erythrose 4-phosphate: step 5/5. Catalyzes the complicated ring closure reaction between the two acyclic compounds 1-deoxy-D-xylulose-5-phosphate (DXP) and 3-amino-2-oxopropyl phosphate (1-amino-acetone-3-phosphate or AAP) to form pyridoxine 5'-phosphate (PNP) and inorganic phosphate. This is Pyridoxine 5'-phosphate synthase from Porphyromonas gingivalis (strain ATCC 33277 / DSM 20709 / CIP 103683 / JCM 12257 / NCTC 11834 / 2561).